Reading from the N-terminus, the 156-residue chain is Small ribosomal subunit protein uS7 (156 aa).

Belongs to the universal ribosomal protein uS7 family. In terms of assembly, part of the 30S ribosomal subunit. Contacts proteins S9 and S11.

One of the primary rRNA binding proteins, it binds directly to 16S rRNA where it nucleates assembly of the head domain of the 30S subunit. Is located at the subunit interface close to the decoding center, probably blocks exit of the E-site tRNA. This is Small ribosomal subunit protein uS7 from Deinococcus deserti (strain DSM 17065 / CIP 109153 / LMG 22923 / VCD115).